We begin with the raw amino-acid sequence, 252 residues long: MSDWNPSLYLHFAAERSRPAVELLARVSLENIEYIADLGCGPGNSTALLHQRWPAARITGIDSSPAMIAEARSALPDCLFVEADIRNWQPEQALDLIFANASLQWLPDHYELFPHLVSLLSPLGVLAVQMPDNWLEPTHVLMREVAWEQNYPDRGREPLAGVHAYYDILSEAGCEVDIWRTTYYHQMPSHQAIIDWVTATGLRPWLQDLTESEQQHFLTRYHQMLEEQYPLQENGQILLAFPRLFIVARRTE.

Belongs to the methyltransferase superfamily. Tam family.

The protein resides in the cytoplasm. The catalysed reaction is trans-aconitate + S-adenosyl-L-methionine = (E)-3-(methoxycarbonyl)pent-2-enedioate + S-adenosyl-L-homocysteine. Its function is as follows. Catalyzes the S-adenosylmethionine monomethyl esterification of trans-aconitate. The protein is Trans-aconitate 2-methyltransferase of Escherichia coli (strain UTI89 / UPEC).